The sequence spans 72 residues: Translation initiation factor IF-1 (72 aa).

Residues 1–72 (MAKDDVIEVE…TRGRITYRYK (72 aa)) enclose the S1-like domain. A Phosphotyrosine modification is found at Tyr60.

Belongs to the IF-1 family. As to quaternary structure, component of the 30S ribosomal translation pre-initiation complex which assembles on the 30S ribosome in the order IF-2 and IF-3, IF-1 and N-formylmethionyl-tRNA(fMet); mRNA recruitment can occur at any time during PIC assembly.

It localises to the cytoplasm. In terms of biological role, one of the essential components for the initiation of protein synthesis. Stabilizes the binding of IF-2 and IF-3 on the 30S subunit to which N-formylmethionyl-tRNA(fMet) subsequently binds. Helps modulate mRNA selection, yielding the 30S pre-initiation complex (PIC). Upon addition of the 50S ribosomal subunit IF-1, IF-2 and IF-3 are released leaving the mature 70S translation initiation complex. The polypeptide is Translation initiation factor IF-1 (Bacillus pumilus (strain SAFR-032)).